A 550-amino-acid polypeptide reads, in one-letter code: Hydroxylamine reductase (550 aa).

The [2Fe-2S] cluster site is built by Cys3, Cys6, Cys18, and Cys25. Residues His249, Glu273, Cys317, Cys405, Cys433, Cys458, Glu492, and Lys494 each contribute to the hybrid [4Fe-2O-2S] cluster site. A Cysteine persulfide modification is found at Cys405.

The protein belongs to the HCP family. [2Fe-2S] cluster is required as a cofactor. Hybrid [4Fe-2O-2S] cluster serves as cofactor.

Its subcellular location is the cytoplasm. The catalysed reaction is A + NH4(+) + H2O = hydroxylamine + AH2 + H(+). Functionally, catalyzes the reduction of hydroxylamine to form NH(3) and H(2)O. The chain is Hydroxylamine reductase from Proteus mirabilis (strain HI4320).